Reading from the N-terminus, the 893-residue chain is Phosphatidate phosphatase LPIN2 (893 aa).

Residues 1–108 (MNYVGQLAGQ…LPAYLATSPI (108 aa)) are N-LIP. The residue at position 106 (S106) is a Phosphoserine. The interval 122 to 216 (LVKSSGNERP…EDYKEPSLFH (95 aa)) is disordered. Residues 123–151 (VKSSGNERPAQSSDVSHTLESEAVFTQSS) show a composition bias toward polar residues. Basic residues predominate over residues 152–162 (VKKKKRRRKKC). A Nuclear localization signal motif is present at residues 153–158 (KKKKRR). Residues S174, S186, and S187 each carry the phosphoserine modification. Residues 204–213 (LKEEDYKEPS) show a composition bias toward basic and acidic residues. A phosphoserine mark is found at S243 and S303. 2 disordered regions span residues 357–400 (LLDA…PDDI) and 417–456 (FPKS…TECL). Low complexity predominate over residues 360–371 (ADPVPSPSAEAP). A compositionally biased stretch (basic residues) spans 384 to 393 (KKKGVHKRSQ). Residues 423-445 (DPGSRQWPESDTFSGSQSPQSVG) are compositionally biased toward polar residues. Phosphoserine is present on S563. The tract at residues 568–611 (LPETKEGKSEVPPANDLPSNAEEPTSARPAENDTSSDEGSQELE) is disordered. Acidic residues predominate over residues 601–611 (TSSDEGSQELE). The C-LIP stretch occupies residues 632-834 (YKKSLRLSSD…RIFTVNPKGE (203 aa)). Positions 686 to 690 (DIDGT) match the DXDXT motif motif. The short motif at 697–701 (LGQIL) is the LXXIL motif element.

The protein belongs to the lipin family. The cofactor is Mg(2+). Expressed at high level in liver and to some extend in lung, kidney, placenta, spleen, thymus, lymph node, prostate, testes, small intestine, and colon. Expressed also in circulating red blood cells and site of lymphopoiesis.

The protein localises to the nucleus. It localises to the cytoplasm. The protein resides in the cytosol. It is found in the endoplasmic reticulum membrane. It catalyses the reaction a 1,2-diacyl-sn-glycero-3-phosphate + H2O = a 1,2-diacyl-sn-glycerol + phosphate. With respect to regulation, inhibited by N-ethylmaleimide. In terms of biological role, acts as a magnesium-dependent phosphatidate phosphatase enzyme which catalyzes the conversion of phosphatidic acid to diacylglycerol during triglyceride, phosphatidylcholine and phosphatidylethanolamine biosynthesis in the endoplasmic reticulum membrane. Plays important roles in controlling the metabolism of fatty acids at different levels. Also acts as a nuclear transcriptional coactivator for PPARGC1A to modulate lipid metabolism. The protein is Phosphatidate phosphatase LPIN2 of Mus musculus (Mouse).